The primary structure comprises 269 residues: Glutamate 5-kinase (269 aa).

ATP is bound at residue Lys-14. Substrate contacts are provided by Ser-54, Asp-141, and Asn-157. ATP contacts are provided by residues 177-178 (SD) and 219-225 (TGGMVTK).

The protein belongs to the glutamate 5-kinase family.

It is found in the cytoplasm. It carries out the reaction L-glutamate + ATP = L-glutamyl 5-phosphate + ADP. It functions in the pathway amino-acid biosynthesis; L-proline biosynthesis; L-glutamate 5-semialdehyde from L-glutamate: step 1/2. Its function is as follows. Catalyzes the transfer of a phosphate group to glutamate to form L-glutamate 5-phosphate. This is Glutamate 5-kinase from Clostridium perfringens (strain 13 / Type A).